The sequence spans 132 residues: UPF0251 protein PTH_0588 (132 aa).

Belongs to the UPF0251 family.

This Pelotomaculum thermopropionicum (strain DSM 13744 / JCM 10971 / SI) protein is UPF0251 protein PTH_0588.